Reading from the N-terminus, the 373-residue chain is tRNA-specific 2-thiouridylase MnmA (373 aa).

ATP contacts are provided by residues 12 to 19 (GMSGGVDS) and Met-38. An interaction with target base in tRNA region spans residues 98 to 100 (NPD). Cys-103 (nucleophile) is an active-site residue. Cys-103 and Cys-200 are joined by a disulfide. Gly-127 contributes to the ATP binding site. The tract at residues 150–152 (KDQ) is interaction with tRNA. Cys-200 functions as the Cysteine persulfide intermediate in the catalytic mechanism. Residues 312–313 (RY) form an interaction with tRNA region.

This sequence belongs to the MnmA/TRMU family.

Its subcellular location is the cytoplasm. It catalyses the reaction S-sulfanyl-L-cysteinyl-[protein] + uridine(34) in tRNA + AH2 + ATP = 2-thiouridine(34) in tRNA + L-cysteinyl-[protein] + A + AMP + diphosphate + H(+). Functionally, catalyzes the 2-thiolation of uridine at the wobble position (U34) of tRNA, leading to the formation of s(2)U34. This Streptococcus thermophilus (strain CNRZ 1066) protein is tRNA-specific 2-thiouridylase MnmA.